Here is a 1444-residue protein sequence, read N- to C-terminus: RNA-directed RNA polymerase P1 (1444 aa).

The segment at Ser-156–Trp-182 is disordered. The RdRp catalytic domain maps to Leu-690–Glu-897.

Belongs to the reoviridae RNA-directed RNA polymerase family.

Its subcellular location is the virion. It localises to the host cytoplasm. The enzyme catalyses RNA(n) + a ribonucleoside 5'-triphosphate = RNA(n+1) + diphosphate. Functionally, RNA-directed RNA polymerase that is involved in both transcription and genome replication. Together with the capping enzyme P5 and protein P7, forms an enzyme complex positioned near the channels situated at each of the five-fold vertices of the core. The protein is RNA-directed RNA polymerase P1 (S1) of Rice dwarf virus (isolate Fujian) (RDV).